The sequence spans 240 residues: 6-phosphogluconolactonase (240 aa).

The protein belongs to the glucosamine/galactosamine-6-phosphate isomerase family. 6-phosphogluconolactonase subfamily.

It carries out the reaction 6-phospho-D-glucono-1,5-lactone + H2O = 6-phospho-D-gluconate + H(+). The protein operates within carbohydrate degradation; pentose phosphate pathway; D-ribulose 5-phosphate from D-glucose 6-phosphate (oxidative stage): step 2/3. Hydrolysis of 6-phosphogluconolactone to 6-phosphogluconate. In Synechocystis sp. (strain ATCC 27184 / PCC 6803 / Kazusa), this protein is 6-phosphogluconolactonase (pgl).